Reading from the N-terminus, the 366-residue chain is Histidinol-phosphate aminotransferase (366 aa).

Lysine 226 is modified (N6-(pyridoxal phosphate)lysine).

The protein belongs to the class-II pyridoxal-phosphate-dependent aminotransferase family. Histidinol-phosphate aminotransferase subfamily. It depends on pyridoxal 5'-phosphate as a cofactor.

The enzyme catalyses L-histidinol phosphate + 2-oxoglutarate = 3-(imidazol-4-yl)-2-oxopropyl phosphate + L-glutamate. The protein operates within amino-acid biosynthesis; L-histidine biosynthesis; L-histidine from 5-phospho-alpha-D-ribose 1-diphosphate: step 7/9. This chain is Histidinol-phosphate aminotransferase, found in Methanosarcina barkeri (strain Fusaro / DSM 804).